Reading from the N-terminus, the 762-residue chain is 5-methyltetrahydropteroyltriglutamate--homocysteine methyltransferase (762 aa).

5-methyltetrahydropteroyltri-L-glutamate is bound by residues 17 to 20 and lysine 111; that span reads REWK. L-homocysteine contacts are provided by residues 435–437 and glutamate 488; that span reads IGS. Residues 435-437 and glutamate 488 contribute to the L-methionine site; that span reads IGS. 5-methyltetrahydropteroyltri-L-glutamate is bound by residues 519-520 and tryptophan 565; that span reads RC. Aspartate 603 contributes to the L-homocysteine binding site. Aspartate 603 contributes to the L-methionine binding site. Residue glutamate 609 participates in 5-methyltetrahydropteroyltri-L-glutamate binding. 3 residues coordinate Zn(2+): histidine 645, cysteine 647, and glutamate 669. Residue histidine 698 is the Proton donor of the active site. Cysteine 730 lines the Zn(2+) pocket.

This sequence belongs to the vitamin-B12 independent methionine synthase family. Zn(2+) serves as cofactor.

It catalyses the reaction 5-methyltetrahydropteroyltri-L-glutamate + L-homocysteine = tetrahydropteroyltri-L-glutamate + L-methionine. The protein operates within amino-acid biosynthesis; L-methionine biosynthesis via de novo pathway; L-methionine from L-homocysteine (MetE route): step 1/1. Catalyzes the transfer of a methyl group from 5-methyltetrahydrofolate to homocysteine resulting in methionine formation. In Bacillus cereus (strain ATCC 10987 / NRS 248), this protein is 5-methyltetrahydropteroyltriglutamate--homocysteine methyltransferase.